The chain runs to 162 residues: Selenoprotein F (162 aa).

A signal peptide spans 1–28; it reads MAAGQGGWLRPALGLRLLLATAFQAVSA. A non-standard amino acid (selenocysteine) is located at residue Sec-93.

Belongs to the selenoprotein M/F family. As to quaternary structure, forms a tight complex with UGGT1/UGCGL1. Interacts with UGGT2/UGCGL2. Interacts with RDH11. In terms of tissue distribution, highest levels in prostate, lower levels in brain, lung, thyroid gland, and large intestine.

It is found in the endoplasmic reticulum lumen. Its function is as follows. May be involved in redox reactions associated with the formation of disulfide bonds. May contribute to the quality control of protein folding in the endoplasmic reticulum. May regulate protein folding by enhancing the catalytic activity of UGGT1/UGCGL1 and UGGT2/UGCGL2. The chain is Selenoprotein F from Rattus norvegicus (Rat).